The chain runs to 434 residues: Trigger factor (434 aa).

Residues 163–248 (GDRVTIDFEG…LTKIEAQHLP (86 aa)) form the PPIase FKBP-type domain.

Belongs to the FKBP-type PPIase family. Tig subfamily.

The protein resides in the cytoplasm. The enzyme catalyses [protein]-peptidylproline (omega=180) = [protein]-peptidylproline (omega=0). Involved in protein export. Acts as a chaperone by maintaining the newly synthesized protein in an open conformation. Functions as a peptidyl-prolyl cis-trans isomerase. The sequence is that of Trigger factor from Methylibium petroleiphilum (strain ATCC BAA-1232 / LMG 22953 / PM1).